An 887-amino-acid chain; its full sequence is 3-hydroxy-3-methylglutaryl-coenzyme A reductase (887 aa).

At 1-9 (MLSRLFRMH) the chain is on the cytoplasmic side. A helical transmembrane segment spans residues 10-39 (GLFVASHPWEVIVGTVTLTICMMSMNMFTG). The Lumenal segment spans residues 40-56 (NNKICGWNYECPKFEED). The chain crosses the membrane as a helical span at residues 57–78 (VLSSDIIILTITRCIAILYIYF). The SSD domain occupies 61–218 (DIIILTITRC…MTFFPACVSL (158 aa)). Residues 75–78 (YIYF) carry the INSIG-binding motif motif. The Cytoplasmic portion of the chain corresponds to 79–89 (QFQNLRQLGSK). Residue K89 forms a Glycyl lysine isopeptide (Lys-Gly) (interchain with G-Cter in ubiquitin) linkage. A helical membrane pass occupies residues 90–114 (YILGIAGLFTIFSSFVFSTVVIHFL). At 115 to 123 (DKELTGLNE) the chain is on the lumenal side. The helical transmembrane segment at 124-149 (ALPFFLLLIDLSRASALAKFALSSNS) threads the bilayer. Residues 150-159 (QDEVRENIAR) lie on the Cytoplasmic side of the membrane. The helical transmembrane segment at 160-187 (GMAILGPTFTLDALVECLVIGVGTMSGV) threads the bilayer. Topologically, residues 188–191 (RQLE) are lumenal. Residues 192–220 (IMCCFGCMSVLANYFVFMTFFPACVSLVL) form a helical membrane-spanning segment. The Cytoplasmic segment spans residues 221 to 248 (ELSRESREGRPIWQLSHFARVLEEEENK). Residue K248 forms a Glycyl lysine isopeptide (Lys-Gly) (interchain with G-Cter in ubiquitin) linkage. Residues 249-275 (PNPVTQRVKMIMSLGLVLVHAHSRWIA) traverse the membrane as a helical segment. The Lumenal portion of the chain corresponds to 276-314 (DPSPQNSTTEHSKVSLGLDEDVSKRIEPSVSLWQFYLSK). Residue N281 is glycosylated (N-linked (GlcNAc...) asparagine). The helical transmembrane segment at 315 to 339 (MISMDIEQVVTLSLAFLLAVKYIFF) threads the bilayer. Over 340 to 887 (EQAETESTLS…LQGTCTKKAA (548 aa)) the chain is Cytoplasmic. Catalysis depends on charge relay system residues E558, K690, and D766. H865 functions as the Proton donor in the catalytic mechanism. S871 carries the post-translational modification Phosphoserine; by AMPK.

It belongs to the HMG-CoA reductase family. In terms of assembly, homotetramer. Homodimer. Interacts (via its SSD) with INSIG1; the interaction, accelerated by sterols, leads to the recruitment of HMGCR to AMFR/gp78 for its ubiquitination by the sterol-mediated ERAD pathway. Interacts with UBIAD1. Undergoes sterol-mediated ubiquitination and ER-associated degradation (ERAD). Accumulation of sterols in the endoplasmic reticulum (ER) membrane, triggers binding of the reductase to the ER membrane protein INSIG1 or INSIG2. The INSIG1 binding leads to the recruitment of the ubiquitin ligase, AMFR/gp78, RNF139 or RNF145, initiating ubiquitination of the reductase. The ubiquitinated reductase is then extracted from the ER membrane and delivered to cytosolic 26S proteosomes by a mechanism probably mediated by the ATPase Valosin-containing protein VCP/p97. The INSIG2-binding leads to the recruitment of the ubiquitin ligase RNF139, initiating ubiquitination of the reductase. Lys-248 is the main site of ubiquitination. Ubiquitination is enhanced by the presence of a geranylgeranylated protein. In terms of processing, N-glycosylated. Deglycosylated by NGLY1 on release from the endoplasmic reticulum (ER) in a sterol-mediated manner. Post-translationally, phosphorylated. Phosphorylation at Ser-871 reduces the catalytic activity.

It is found in the endoplasmic reticulum membrane. It localises to the peroxisome membrane. The catalysed reaction is (R)-mevalonate + 2 NADP(+) + CoA = (3S)-3-hydroxy-3-methylglutaryl-CoA + 2 NADPH + 2 H(+). The protein operates within metabolic intermediate biosynthesis; (R)-mevalonate biosynthesis; (R)-mevalonate from acetyl-CoA: step 3/3. Its activity is regulated as follows. Regulated by a negative feedback mechanism through sterols and non-sterol metabolites derived from mevalonate. Phosphorylation at Ser-871 down-regulates the catalytic activity. In terms of biological role, catalyzes the conversion of (3S)-hydroxy-3-methylglutaryl-CoA (HMG-CoA) to mevalonic acid, the rate-limiting step in the synthesis of cholesterol and other isoprenoids, thus plays a critical role in cellular cholesterol homeostasis. This chain is 3-hydroxy-3-methylglutaryl-coenzyme A reductase (HMGCR), found in Mesocricetus auratus (Golden hamster).